Consider the following 485-residue polypeptide: Otoconin-90 (485 aa).

Residues 1–17 form the signal peptide; it reads MIMLLMVGMLMAPCVGA. The N-linked (GlcNAc...) asparagine glycan is linked to Asn37. The segment at 75 to 189 is phospholipase A2-like 1; it reads LLQFVNSMRC…SLNFLDASFC (115 aa). Cystine bridges form between Cys84–Cys144, Cys98–Cys189, Cys100–Cys116, Cys115–Cys171, Cys122–Cys164, Cys131–Cys157, and Cys151–Cys162. N-linked (GlcNAc...) asparagine glycans are attached at residues Asn178 and Asn288. Phospholipase A2-like stretches follow at residues 315-371 and 383-435; these read MLQL…QVGC and CEDH…PVSC. Asn417 carries N-linked (GlcNAc...) asparagine glycosylation. The segment at 444 to 485 is disordered; sequence LASSVDSSSEENSEEAPPQMERLRRFLEKPPGPLGARPLGGK.

The protein belongs to the phospholipase A2 family. Interacts with OTOL1. As to expression, in the embryo, highly expressed in the developing otocyst with weak expression in the brain. Also expressed in nonsensory epithelia of both the vestibular and cochlear portions of the developing inner ear. Not expressed in adult or embryonic macular sensory epithelia.

The protein localises to the secreted. Functionally, major protein of the otoconia, a calcium carbonate structure in the saccule and utricle of the ear. Together with OTOL1, acts as a scaffold for otoconia biomineralization: sequesters calcium and forms interconnecting fibrils between otoconia that are incorporated into the calcium crystal structure. Together with OTOL1, modulates calcite crystal morphology and growth kinetics. It is unlikely that this protein has phospholipase A2 activity. This Mus musculus (Mouse) protein is Otoconin-90.